We begin with the raw amino-acid sequence, 485 residues long: Calcium/manganese antiporter SLC30A10 (485 aa).

The Cytoplasmic portion of the chain corresponds to 1–10; the sequence is MGRYSGKTCR. The helical transmembrane segment at 11–31 threads the bilayer; it reads LLFMLVLTVAFFVAELVSGYL. The Extracellular portion of the chain corresponds to 32–40; the sequence is GNSIALLSD. The chain crosses the membrane as a helical span at residues 41 to 61; sequence SFNMLSDLISLCVGLSAGYIA. Residues 62–81 lie on the Cytoplasmic side of the membrane; sequence RRPTRGFSATYGYARAEVVG. The chain crosses the membrane as a helical span at residues 82–102; the sequence is ALSNAVFLTALCFTIFVEAVL. Residues 103 to 113 are Extracellular-facing; it reads RLARPERIDDP. A helical membrane pass occupies residues 114–134; the sequence is ELVLIVGVLGLLVNVVGLLIF. Over 135–244 the chain is Cytoplasmic; sequence QDCAAWFACC…ALNIRGVLLH (110 aa). Residues 167-196 are disordered; sequence FGGPQGAEDPRRAADPTAPGSDSAVTLRGT. Residues 245-265 form a helical membrane-spanning segment; that stretch reads VMGDALGSVVVVITAIIFYVL. Residues 266–278 are Extracellular-facing; it reads PLKSEDPCNWQCY. The chain crosses the membrane as a helical span at residues 279-299; the sequence is IDPSLTVLMVIIILSSAFPLI. Residues 300–485 are Cytoplasmic-facing; that stretch reads KETAAILLQM…DQCYVNRTHF (186 aa). The tract at residues 308-485 is required for plasma membrane localization; it reads QMVPKGVNME…DQCYVNRTHF (178 aa).

Belongs to the cation diffusion facilitator (CDF) transporter (TC 2.A.4) family. SLC30A subfamily. As to quaternary structure, forms homodimers. Forms heterodimers and high-molecular weight oligomers with SLC30A3, SLC30A2 and SLC30A4; heterodimerization is mediated by covalent-bound tyrosine residues, occurs probably in a tissue-specific manner and could mediate the intracellular zinc transport activity into early endosomes and recycling endosomes. In terms of tissue distribution, specifically expressed in fetal liver and fetal brain. Expressed in adult tissues with relative levels small intestine &gt; liver &gt; testes &gt; brain &gt; ovary &gt; colon &gt; cervix &gt; prostate &gt; placenta. Expressed in liver and neurons of the nervous system (at protein level).

It localises to the cell membrane. The protein localises to the golgi apparatus membrane. The protein resides in the recycling endosome membrane. Its subcellular location is the early endosome membrane. The enzyme catalyses Mn(2+)(out) + Ca(2+)(in) = Mn(2+)(in) + Ca(2+)(out). It carries out the reaction Zn(2+)(in) = Zn(2+)(out). Its function is as follows. Calcium:manganese antiporter of the plasma membrane mediating the efflux of intracellular manganese coupled to an active extracellular calcium exchange. Required for intracellular manganese homeostasis, an essential cation for the function of several enzymes, including some crucially important for the metabolism of neurotransmitters and other neuronal metabolic pathways. Manganese can also be cytotoxic and induce oxidative stress, mitochondrial dysfunction and apoptosis. Could also have an intracellular zinc ion transporter activity, directly regulating intracellular zinc ion homeostasis and more indirectly various signaling pathway and biological processes. This chain is Calcium/manganese antiporter SLC30A10, found in Homo sapiens (Human).